We begin with the raw amino-acid sequence, 379 residues long: Cobalt-precorrin-5B C(1)-methyltransferase (379 aa).

It belongs to the CbiD family.

The enzyme catalyses Co-precorrin-5B + S-adenosyl-L-methionine = Co-precorrin-6A + S-adenosyl-L-homocysteine. Its pathway is cofactor biosynthesis; adenosylcobalamin biosynthesis; cob(II)yrinate a,c-diamide from sirohydrochlorin (anaerobic route): step 6/10. In terms of biological role, catalyzes the methylation of C-1 in cobalt-precorrin-5B to form cobalt-precorrin-6A. The chain is Cobalt-precorrin-5B C(1)-methyltransferase from Salmonella choleraesuis (strain SC-B67).